A 251-amino-acid chain; its full sequence is Phosphate import ATP-binding protein PstB 2 (251 aa).

The ABC transporter domain occupies 5–246 (ITSKDVHLSY…PKKQITSDYL (242 aa)). Residue 37–44 (GPSGCGKS) participates in ATP binding.

Belongs to the ABC transporter superfamily. Phosphate importer (TC 3.A.1.7) family. In terms of assembly, the complex is composed of two ATP-binding proteins (PstB), two transmembrane proteins (PstC and PstA) and a solute-binding protein (PstS).

The protein localises to the cell membrane. The catalysed reaction is phosphate(out) + ATP + H2O = ADP + 2 phosphate(in) + H(+). Functionally, part of the ABC transporter complex PstSACB involved in phosphate import. Responsible for energy coupling to the transport system. In Lactobacillus johnsonii (strain CNCM I-12250 / La1 / NCC 533), this protein is Phosphate import ATP-binding protein PstB 2.